The chain runs to 293 residues: 4-diphosphocytidyl-2-C-methyl-D-erythritol kinase (293 aa).

The active site involves lysine 16. Position 99–109 (99–109 (PMGAGLGGGSS)) interacts with ATP. Aspartate 141 is an active-site residue.

It belongs to the GHMP kinase family. IspE subfamily.

It carries out the reaction 4-CDP-2-C-methyl-D-erythritol + ATP = 4-CDP-2-C-methyl-D-erythritol 2-phosphate + ADP + H(+). The protein operates within isoprenoid biosynthesis; isopentenyl diphosphate biosynthesis via DXP pathway; isopentenyl diphosphate from 1-deoxy-D-xylulose 5-phosphate: step 3/6. In terms of biological role, catalyzes the phosphorylation of the position 2 hydroxy group of 4-diphosphocytidyl-2C-methyl-D-erythritol. This chain is 4-diphosphocytidyl-2-C-methyl-D-erythritol kinase, found in Burkholderia thailandensis (strain ATCC 700388 / DSM 13276 / CCUG 48851 / CIP 106301 / E264).